Reading from the N-terminus, the 461-residue chain is Coronin-1A (461 aa).

The residue at position 2 (S2) is an N-acetylserine. S2 bears the Phosphoserine; by PKC mark. WD repeat units lie at residues 13–63 (HVFG…LVLP), 73–110 (NAPT…MVWE), 123–160 (PVVT…MVWD), 164–204 (GAAM…RIIE), 207–251 (KGTV…ALWD), 258–296 (PLSL…RYFE), and 302–349 (PFLH…EPIA). Over residues 403–418 (ELRVNRGLDTGRRRAA) the composition is skewed to basic and acidic residues. A disordered region spans residues 403 to 432 (ELRVNRGLDTGRRRAAPEASGTPSSDAVSR). The residue at position 412 (T412) is a Phosphothreonine; by PKC. At S422 the chain carries Phosphoserine. Positions 424–460 (TPSSDAVSRLEEEMRKLQATVQELQKRLDRLEETVQA) form a coiled coil. N6-acetyllysine is present on K449.

It belongs to the WD repeat coronin family. Binds actin. In terms of processing, phosphorylation at Thr-412 by PKC strongly down-regulates the association with actin. Polyubiquitinated by RNF128 with 'Lys-48'-linked chains, leading to proteasomal degradation. As to expression, expressed in brain, thymus, spleen, bone marrow and lymph node. Low in lung and gut.

It localises to the cytoplasm. Its subcellular location is the cytoskeleton. It is found in the cell cortex. The protein resides in the cytoplasmic vesicle. The protein localises to the phagosome membrane. May be a crucial component of the cytoskeleton of highly motile cells, functioning both in the invagination of large pieces of plasma membrane, as well as in forming protrusions of the plasma membrane involved in cell locomotion. In mycobacteria-infected cells, its retention on the phagosomal membrane prevents fusion between phagosomes and lysosomes. In Homo sapiens (Human), this protein is Coronin-1A (CORO1A).